Reading from the N-terminus, the 188-residue chain is Elongation factor P (188 aa).

It belongs to the elongation factor P family.

It localises to the cytoplasm. The protein operates within protein biosynthesis; polypeptide chain elongation. In terms of biological role, involved in peptide bond synthesis. Stimulates efficient translation and peptide-bond synthesis on native or reconstituted 70S ribosomes in vitro. Probably functions indirectly by altering the affinity of the ribosome for aminoacyl-tRNA, thus increasing their reactivity as acceptors for peptidyl transferase. In Chlorobium limicola (strain DSM 245 / NBRC 103803 / 6330), this protein is Elongation factor P.